The primary structure comprises 476 residues: Adenosylhomocysteinase (476 aa).

Threonine 67, aspartate 142, and glutamate 202 together coordinate substrate. Threonine 203–threonine 205 contributes to the NAD(+) binding site. Lysine 232 and aspartate 236 together coordinate substrate. NAD(+)-binding positions include asparagine 237, glycine 266 to glycine 271, glutamate 289, asparagine 324, isoleucine 345 to histidine 347, and asparagine 390.

Belongs to the adenosylhomocysteinase family. It depends on NAD(+) as a cofactor.

The protein localises to the cytoplasm. It catalyses the reaction S-adenosyl-L-homocysteine + H2O = L-homocysteine + adenosine. The protein operates within amino-acid biosynthesis; L-homocysteine biosynthesis; L-homocysteine from S-adenosyl-L-homocysteine: step 1/1. May play a key role in the regulation of the intracellular concentration of adenosylhomocysteine. The sequence is that of Adenosylhomocysteinase from Prochlorococcus marinus (strain SARG / CCMP1375 / SS120).